Here is a 241-residue protein sequence, read N- to C-terminus: Carboxy-S-adenosyl-L-methionine synthase (241 aa).

S-adenosyl-L-methionine contacts are provided by residues Y38, 63-65, 88-89, 116-117, N131, and R198; these read GCS, DN, and DI.

This sequence belongs to the class I-like SAM-binding methyltransferase superfamily. Cx-SAM synthase family. As to quaternary structure, homodimer.

The catalysed reaction is prephenate + S-adenosyl-L-methionine = carboxy-S-adenosyl-L-methionine + 3-phenylpyruvate + H2O. Catalyzes the conversion of S-adenosyl-L-methionine (SAM) to carboxy-S-adenosyl-L-methionine (Cx-SAM). This chain is Carboxy-S-adenosyl-L-methionine synthase, found in Pasteurella multocida (strain Pm70).